The primary structure comprises 100 residues: Aspartyl/glutamyl-tRNA(Asn/Gln) amidotransferase subunit C (100 aa).

It belongs to the GatC family. Heterotrimer of A, B and C subunits.

It catalyses the reaction L-glutamyl-tRNA(Gln) + L-glutamine + ATP + H2O = L-glutaminyl-tRNA(Gln) + L-glutamate + ADP + phosphate + H(+). It carries out the reaction L-aspartyl-tRNA(Asn) + L-glutamine + ATP + H2O = L-asparaginyl-tRNA(Asn) + L-glutamate + ADP + phosphate + 2 H(+). Its function is as follows. Allows the formation of correctly charged Asn-tRNA(Asn) or Gln-tRNA(Gln) through the transamidation of misacylated Asp-tRNA(Asn) or Glu-tRNA(Gln) in organisms which lack either or both of asparaginyl-tRNA or glutaminyl-tRNA synthetases. The reaction takes place in the presence of glutamine and ATP through an activated phospho-Asp-tRNA(Asn) or phospho-Glu-tRNA(Gln). The polypeptide is Aspartyl/glutamyl-tRNA(Asn/Gln) amidotransferase subunit C (Corynebacterium aurimucosum (strain ATCC 700975 / DSM 44827 / CIP 107346 / CN-1) (Corynebacterium nigricans)).